A 199-amino-acid polypeptide reads, in one-letter code: Large ribosomal subunit protein mL51 (199 aa).

The transit peptide at 1 to 15 (MNSASISRLTSVIRT) directs the protein to the mitochondrion.

This sequence belongs to the mitochondrion-specific ribosomal protein mL51 family. Component of the mitochondrial ribosome large subunit (39S) which comprises a 16S rRNA and about 50 distinct proteins.

It localises to the mitochondrion. In Caenorhabditis briggsae, this protein is Large ribosomal subunit protein mL51 (mrpl-51).